The primary structure comprises 137 residues: Basic phospholipase A2 homolog Bsc-K49 (137 aa).

The first 16 residues, 1 to 16 (MRTLWIVAVLLVGVEG), serve as a signal peptide directing secretion. Disulfide bonds link Cys42/Cys131, Cys44/Cys60, Cys59/Cys111, Cys65/Cys137, Cys66/Cys104, Cys73/Cys97, and Cys91/Cys102. The interval 121–133 (KNYKITMKMFCKK) is important for membrane-damaging activities in eukaryotes and bacteria; heparin-binding.

This sequence belongs to the phospholipase A2 family. Group II subfamily. K49 sub-subfamily. As to quaternary structure, homodimer; non-covalently linked. Expressed by the venom gland.

It localises to the secreted. Functionally, snake venom phospholipase A2 that lacks enzymatic activity. Is myotoxic, and displays edema-inducing activities. A model of myotoxic mechanism has been proposed: an apo Lys49-PLA2 is activated by the entrance of a hydrophobic molecule (e.g. fatty acid) at the hydrophobic channel of the protein leading to a reorientation of a monomer. This reorientation causes a transition between 'inactive' to 'active' states, causing alignment of C-terminal and membrane-docking sites (MDoS) side-by-side and putting the membrane-disruption sites (MDiS) in the same plane, exposed to solvent and in a symmetric position for both monomers. The MDoS region stabilizes the toxin on membrane by the interaction of charged residues with phospholipid head groups. Subsequently, the MDiS region destabilizes the membrane with penetration of hydrophobic residues. This insertion causes a disorganization of the membrane, allowing an uncontrolled influx of ions (i.e. calcium and sodium), and eventually triggering irreversible intracellular alterations and cell death. The polypeptide is Basic phospholipase A2 homolog Bsc-K49 (Bothriechis schlegelii (Eyelash palm pitviper)).